The following is a 318-amino-acid chain: NADH-ubiquinone oxidoreductase chain 1 (318 aa).

Transmembrane regions (helical) follow at residues 2 to 22, 36 to 56, 69 to 89, 100 to 120, 130 to 152, 171 to 191, 217 to 237, 254 to 273, and 294 to 314; these read FLTN…FLTL, GPNI…IKLF, LLFT…WIPL, LGML…LWSG, IGAL…ILLH, HIWL…STLA, AGPF…MNAL, LYST…FLWI, and LPLT…LTSI.

Belongs to the complex I subunit 1 family.

The protein resides in the mitochondrion inner membrane. It carries out the reaction a ubiquinone + NADH + 5 H(+)(in) = a ubiquinol + NAD(+) + 4 H(+)(out). In terms of biological role, core subunit of the mitochondrial membrane respiratory chain NADH dehydrogenase (Complex I) that is believed to belong to the minimal assembly required for catalysis. Complex I functions in the transfer of electrons from NADH to the respiratory chain. The immediate electron acceptor for the enzyme is believed to be ubiquinone. The chain is NADH-ubiquinone oxidoreductase chain 1 (MT-ND1) from Cyclopes didactylus (Silky anteater).